The sequence spans 570 residues: Pyruvate decarboxylase (570 aa).

The propeptide at 1 to 2 (MV) is removed in mature form. Residues aspartate 33 and histidine 120 each contribute to the substrate site. The thiamine pyrophosphate binding stretch occupies residues 394–476 (DSWFNGIQLK…MLINNRGYTI (83 aa)). Residues aspartate 444, asparagine 471, and glycine 473 each contribute to the Mg(2+) site. Glutamate 477 lines the substrate pocket.

This sequence belongs to the TPP enzyme family. Homomer. A metal cation serves as cofactor. The cofactor is thiamine diphosphate.

It localises to the cytoplasm. The catalysed reaction is a 2-oxocarboxylate + H(+) = an aldehyde + CO2. It participates in carbohydrate metabolism; pyruvate metabolism. In Neurospora crassa (strain ATCC 24698 / 74-OR23-1A / CBS 708.71 / DSM 1257 / FGSC 987), this protein is Pyruvate decarboxylase (cfp).